The primary structure comprises 615 residues: Medium-chain acyl-CoA ligase ACSF2, mitochondrial (615 aa).

Residues methionine 1–alanine 41 constitute a mitochondrion transit peptide. Lysine 179 carries the N6-acetyllysine modification. Lysine 182 is subject to N6-acetyllysine; alternate. Residue lysine 182 is modified to N6-succinyllysine; alternate. Lysine 199 is subject to N6-acetyllysine. ATP is bound at residue threonine 263–lysine 271. An N6-acetyllysine mark is found at lysine 340 and lysine 398. An N6-succinyllysine modification is found at lysine 478. Residues aspartate 493 and arginine 508 each contribute to the ATP site. Lysine 510 carries the post-translational modification N6-acetyllysine. N6-acetyllysine; alternate occurs at positions 544 and 570. N6-succinyllysine; alternate is present on residues lysine 544 and lysine 570. Lysine 599 lines the ATP pocket. The residue at position 599 (lysine 599) is an N6-succinyllysine.

This sequence belongs to the ATP-dependent AMP-binding enzyme family.

It is found in the mitochondrion. The catalysed reaction is a medium-chain fatty acid + ATP + CoA = a medium-chain fatty acyl-CoA + AMP + diphosphate. The enzyme catalyses octanoate + ATP + CoA = octanoyl-CoA + AMP + diphosphate. Functionally, acyl-CoA synthases catalyze the initial reaction in fatty acid metabolism, by forming a thioester with CoA. Has some preference toward medium-chain substrates. Plays a role in adipocyte differentiation. This is Medium-chain acyl-CoA ligase ACSF2, mitochondrial from Mus musculus (Mouse).